Reading from the N-terminus, the 95-residue chain is ESAT-6-like protein EsxC (95 aa).

Belongs to the WXG100 family. ESAT-6 subfamily.

It is found in the secreted. This Mycobacterium tuberculosis (strain CDC 1551 / Oshkosh) protein is ESAT-6-like protein EsxC.